The chain runs to 114 residues: Protein preY, mitochondrial (114 aa).

The N-terminal 35 residues, 1 to 35 (MLSGARCRLASALRGTRAPPSAVARRCLHASGSRP), are a transit peptide targeting the mitochondrion. The interval 14–49 (RGTRAPPSAVARRCLHASGSRPLADRGKKTEEPPRD) is disordered. The segment covering 36 to 49 (LADRGKKTEEPPRD) has biased composition (basic and acidic residues). Positions 51–97 (DPALLEFLVCPLSKKPLRYEASTNELINEELGIAYPIIDGIPNMIPQ) constitute a TRM112 domain.

The protein belongs to the PREY family. Interacts (via TRM112 domain) with NDUFAF5; the interaction is direct and stabilizes NDUFAF5 protein. Interacts with COQ5; the interaction is direct, stabilizes COQ5 protein and associates PYURF with COQ enzyme complex.

The protein localises to the mitochondrion. Functionally, in mitochondria, S-adenosylmethionine-dependent methyltransferase chaperone that supports both coenzyme Q biosynthesis, by stabilizing its components, such as COQ5, and NADH:ubiquinone oxidoreductase complex (complex I, MT-ND1) assembly, by stabilizing complex I assembly factors, such as NDUFAF5. The chain is Protein preY, mitochondrial from Homo sapiens (Human).